We begin with the raw amino-acid sequence, 27 residues long: M-ectatotoxin-Eb2a (27 aa).

Expressed by the venom gland.

The protein resides in the secreted. Its function is as follows. Antimicrobial peptide forming an alpha-helix in watery and membraneous environments, enabling it to perforate membranes. Active against Gram-negative bacteria E.coli DH5alpha (MIC=5 uM), E.coli MH1 (MIC=0.6 uM) and P.aeruginosa PAO1 (MIC=10 uM) and against Gram-positive bacteria B.subtilis VKM B-501 (MIC=0.6 uM) and A.globiformis VKM Ac-1112 (MIC=0.2 uM). Has cytolytic and hemolytic activity. This chain is M-ectatotoxin-Eb2a, found in Ectatomma brunneum (Ant).